The following is a 228-amino-acid chain: Ribonuclease HII (228 aa).

The RNase H type-2 domain occupies 1–210; the sequence is MKIAGIDEAG…LKKIAEKVES (210 aa). The a divalent metal cation site is built by aspartate 7, glutamate 8, and aspartate 105.

It belongs to the RNase HII family. Monomer. Mn(2+) serves as cofactor. It depends on Mg(2+) as a cofactor.

It is found in the cytoplasm. It carries out the reaction Endonucleolytic cleavage to 5'-phosphomonoester.. In terms of biological role, endonuclease that specifically degrades the RNA of RNA-DNA hybrids. This Thermococcus kodakarensis (strain ATCC BAA-918 / JCM 12380 / KOD1) (Pyrococcus kodakaraensis (strain KOD1)) protein is Ribonuclease HII (rnhB).